We begin with the raw amino-acid sequence, 247 residues long: Carboxy-S-adenosyl-L-methionine synthase (247 aa).

S-adenosyl-L-methionine is bound by residues Tyr-39, 64–66 (GCS), 89–90 (DN), 117–118 (DI), Asn-132, and Arg-199.

It belongs to the class I-like SAM-binding methyltransferase superfamily. Cx-SAM synthase family. As to quaternary structure, homodimer.

The catalysed reaction is prephenate + S-adenosyl-L-methionine = carboxy-S-adenosyl-L-methionine + 3-phenylpyruvate + H2O. Catalyzes the conversion of S-adenosyl-L-methionine (SAM) to carboxy-S-adenosyl-L-methionine (Cx-SAM). This Salmonella enteritidis PT4 (strain P125109) protein is Carboxy-S-adenosyl-L-methionine synthase.